A 1228-amino-acid polypeptide reads, in one-letter code: Probable phospholipid-transporting ATPase 5 (1228 aa).

The Cytoplasmic segment spans residues 1–74 (MARGRIRSKL…TTRYNLITFF (74 aa)). The chain crosses the membrane as a helical span at residues 75 to 96 (PKSLYEQFHRAANLYFLVAAIL). The Extracellular segment spans residues 97–100 (SVFP). A helical transmembrane segment spans residues 101-123 (LSPFNKWSMIAPLVFVVGLSMLK). Residues 124 to 305 (EALEDWRRFM…SRIERTMDYI (182 aa)) lie on the Cytoplasmic side of the membrane. The chain crosses the membrane as a helical span at residues 306–327 (IYTLLVLLILISCISSSGFAWE). Over 328-359 (TEFHMPKMWYLRPGEPIDFTNPINPIYAGVVH) the chain is Extracellular. The chain crosses the membrane as a helical span at residues 360-377 (LITALLLYGYLIPISLYV). The Cytoplasmic portion of the chain corresponds to 378 to 934 (SIEVVKVWQA…HGHWCYKRIA (557 aa)). D425 functions as the 4-aspartylphosphate intermediate in the catalytic mechanism. Residue K616 forms a Glycyl lysine isopeptide (Lys-Gly) (interchain with G-Cter in ubiquitin) linkage. Mg(2+) is bound by residues D879 and D883. A helical membrane pass occupies residues 935-954 (QMICYFFYKNIAFGLTLFYF). The Extracellular portion of the chain corresponds to 955–968 (EAFTGFSGQSVYND). Residues 969–988 (YYLLLFNVVLTSLPVIALGV) form a helical membrane-spanning segment. The Cytoplasmic portion of the chain corresponds to 989–1018 (FEQDVSSEICLQFPALYQQGTKNLFFDWSR). A helical membrane pass occupies residues 1019 to 1041 (ILGWMCNGVYASLVIFFLNIGII). The Extracellular portion of the chain corresponds to 1042–1054 (YSQAFRDNGQTAD). Residues 1055-1077 (MDAVGTTMFTCIIWAANVQIALT) form a helical membrane-spanning segment. At 1078–1083 (MSHFTW) the chain is on the cytoplasmic side. Residues 1084–1104 (IQHVLIWGSIGMWYLFVAIYS) form a helical membrane-spanning segment. At 1105–1117 (MMPPSYSGNIYRI) the chain is on the extracellular side. The helical transmembrane segment at 1118–1146 (LDEILAPAPIYWMATLLVTVAAVLPYVAH) threads the bilayer. The Cytoplasmic portion of the chain corresponds to 1147 to 1228 (IAFQRFLNPL…AQDAMSPRSL (82 aa)).

It belongs to the cation transport ATPase (P-type) (TC 3.A.3) family. Type IV subfamily.

The protein localises to the membrane. It carries out the reaction ATP + H2O + phospholipidSide 1 = ADP + phosphate + phospholipidSide 2.. In terms of biological role, involved in transport of phospholipids. This is Probable phospholipid-transporting ATPase 5 from Arabidopsis thaliana (Mouse-ear cress).